A 356-amino-acid polypeptide reads, in one-letter code: sn-glycerol-3-phosphate import ATP-binding protein UgpC (356 aa).

In terms of domain architecture, ABC transporter spans 4–235; that stretch reads LKLQAVTKSW…PASRFVASFI (232 aa). 37-44 serves as a coordination point for ATP; the sequence is GPSGCGKS.

The protein belongs to the ABC transporter superfamily. sn-glycerol-3-phosphate importer (TC 3.A.1.1.3) family. In terms of assembly, the complex is composed of two ATP-binding proteins (UgpC), two transmembrane proteins (UgpA and UgpE) and a solute-binding protein (UgpB).

The protein resides in the cell inner membrane. It catalyses the reaction sn-glycerol 3-phosphate(out) + ATP + H2O = sn-glycerol 3-phosphate(in) + ADP + phosphate + H(+). Part of the ABC transporter complex UgpBAEC involved in sn-glycerol-3-phosphate (G3P) import. Responsible for energy coupling to the transport system. This is sn-glycerol-3-phosphate import ATP-binding protein UgpC from Salmonella choleraesuis (strain SC-B67).